Here is an 800-residue protein sequence, read N- to C-terminus: Phenylalanine--tRNA ligase beta subunit (800 aa).

The tRNA-binding domain maps to 39-154; that stretch reads TKDIKKLVVG…EAVKPGTDAL (116 aa). A B5 domain is found at 408–483; that stretch reads SFVTPIEITA…RIYGYDEIPS (76 aa). Mg(2+) is bound by residues D461, D467, E470, and E471. The FDX-ACB domain occupies 708–800; the sequence is PRFPGVTRDI…ALKKHGAIIR (93 aa).

The protein belongs to the phenylalanyl-tRNA synthetase beta subunit family. Type 1 subfamily. Tetramer of two alpha and two beta subunits. Mg(2+) serves as cofactor.

The protein localises to the cytoplasm. The catalysed reaction is tRNA(Phe) + L-phenylalanine + ATP = L-phenylalanyl-tRNA(Phe) + AMP + diphosphate + H(+). This is Phenylalanine--tRNA ligase beta subunit from Staphylococcus epidermidis (strain ATCC 12228 / FDA PCI 1200).